The sequence spans 188 residues: dCTP deaminase (188 aa).

109 to 114 (KSTYAR) lines the dCTP pocket. The active-site Proton donor/acceptor is Glu135. Positions 154, 168, and 178 each coordinate dCTP.

It belongs to the dCTP deaminase family. As to quaternary structure, homotrimer.

The catalysed reaction is dCTP + H2O + H(+) = dUTP + NH4(+). The protein operates within pyrimidine metabolism; dUMP biosynthesis; dUMP from dCTP (dUTP route): step 1/2. Functionally, catalyzes the deamination of dCTP to dUTP. This is dCTP deaminase from Helicobacter pylori (strain P12).